The following is a 659-amino-acid chain: Methionine--tRNA ligase (659 aa).

Residues 13–23 (YYPSGNLHIGH) carry the 'HIGH' region motif. The 'KMSKS' region signature appears at 308–312 (KMSKS). ATP is bound at residue K311. The tRNA-binding domain occupies 559–659 (DFDKVEIKAA…SAIPNGAVIK (101 aa)).

It belongs to the class-I aminoacyl-tRNA synthetase family. MetG type 2B subfamily. Homodimer.

Its subcellular location is the cytoplasm. It carries out the reaction tRNA(Met) + L-methionine + ATP = L-methionyl-tRNA(Met) + AMP + diphosphate. Its function is as follows. Is required not only for elongation of protein synthesis but also for the initiation of all mRNA translation through initiator tRNA(fMet) aminoacylation. This Staphylococcus haemolyticus (strain JCSC1435) protein is Methionine--tRNA ligase.